A 369-amino-acid polypeptide reads, in one-letter code: Molybdenum import ATP-binding protein ModC 1 (369 aa).

Positions 10-240 constitute an ABC transporter domain; the sequence is KGYIEVAFNG…PALASRSEAA (231 aa). 42–49 is a binding site for ATP; the sequence is GPPGCGKT. Positions 297 to 367 constitute a Mop domain; that stretch reads ASSILNVFRA…ELCGKLGDDG (71 aa).

The protein belongs to the ABC transporter superfamily. Molybdate importer (TC 3.A.1.8) family. The complex is composed of two ATP-binding proteins (ModC), two transmembrane proteins (ModB) and a solute-binding protein (ModA).

Its subcellular location is the cell inner membrane. The catalysed reaction is molybdate(out) + ATP + H2O = molybdate(in) + ADP + phosphate + H(+). Part of the ABC transporter complex ModABC involved in molybdenum import. Responsible for energy coupling to the transport system. This chain is Molybdenum import ATP-binding protein ModC 1, found in Bradyrhizobium diazoefficiens (strain JCM 10833 / BCRC 13528 / IAM 13628 / NBRC 14792 / USDA 110).